The primary structure comprises 551 residues: Probable glucomannan 4-beta-mannosyltransferase 3 (551 aa).

A helical transmembrane segment spans residues 60-80; sequence ACLALSAMLLADAVLMAAACF. Residue D154 is part of the active site. Residues D213 and D215 each coordinate substrate. D307 is a catalytic residue. 4 consecutive transmembrane segments (helical) span residues 386–406, 409–429, 504–524, and 525–545; these read VVAH…SVLI, VTVP…LHAI, ILFS…GGDY, and YFVY…GFCG.

Belongs to the glycosyltransferase 2 family. Plant cellulose synthase-like A subfamily.

The protein resides in the golgi apparatus membrane. It carries out the reaction GDP-mannose + (glucomannan)n = GDP + (glucomannan)n+1.. Functionally, probable mannan synthase which consists of a 4-beta-mannosyltransferase activity on mannan using GDP-mannose. The beta-1,4-mannan product is the backbone for galactomannan synthesis by galactomannan galactosyltransferase. Galactomannan is a noncellulosic polysaccharides of plant cell wall. This chain is Probable glucomannan 4-beta-mannosyltransferase 3, found in Oryza sativa subsp. japonica (Rice).